A 77-amino-acid chain; its full sequence is RNA-binding protein Hfq (77 aa).

Residues 9–69 form the Sm domain; sequence DQFLNQLRKE…ISTFAPQKNV (61 aa).

This sequence belongs to the Hfq family. Homohexamer.

In terms of biological role, RNA chaperone that binds small regulatory RNA (sRNAs) and mRNAs to facilitate mRNA translational regulation in response to envelope stress, environmental stress and changes in metabolite concentrations. Also binds with high specificity to tRNAs. The chain is RNA-binding protein Hfq from Shouchella clausii (strain KSM-K16) (Alkalihalobacillus clausii).